We begin with the raw amino-acid sequence, 375 residues long: N-acetylneuraminate epimerase (375 aa).

Residues 1-22 (MKLTKTALCTALFATFTFSANA) form the signal peptide. 7 Kelch repeats span residues 43-87 (TVYV…AAVD), 89-140 (KLYV…ASHG), 142-176 (KVYI…EIAA), 177-222 (AYFD…TIQG), 225-273 (LVVV…LAGA), 295-344 (KQYK…SYNN), and 346-375 (VLLI…LTIE). The active-site Proton acceptor is Glu231.

It belongs to the NanM family. Homodimer.

It is found in the periplasm. The catalysed reaction is N-acetyl-alpha-neuraminate = N-acetyl-beta-neuraminate. Converts alpha-N-acetylneuranimic acid (Neu5Ac) to the beta-anomer, accelerating the equilibrium between the alpha- and beta-anomers. Probably facilitates sialidase-negative bacteria to compete successfully for limited amounts of extracellular Neu5Ac, which is likely taken up in the beta-anomer. In addition, the rapid removal of sialic acid from solution might be advantageous to the bacterium to damp down host responses. In Haemophilus influenzae (strain PittEE), this protein is N-acetylneuraminate epimerase.